The sequence spans 316 residues: Beta-ketoacyl-[acyl-carrier-protein] synthase III (316 aa).

Active-site residues include Cys112 and His243. The tract at residues 244-248 (QANIR) is ACP-binding. The active site involves Asn273.

This sequence belongs to the thiolase-like superfamily. FabH family. In terms of assembly, homodimer.

It localises to the cytoplasm. The catalysed reaction is malonyl-[ACP] + acetyl-CoA + H(+) = 3-oxobutanoyl-[ACP] + CO2 + CoA. Its pathway is lipid metabolism; fatty acid biosynthesis. Catalyzes the condensation reaction of fatty acid synthesis by the addition to an acyl acceptor of two carbons from malonyl-ACP. Catalyzes the first condensation reaction which initiates fatty acid synthesis and may therefore play a role in governing the total rate of fatty acid production. Possesses both acetoacetyl-ACP synthase and acetyl transacylase activities. Its substrate specificity determines the biosynthesis of branched-chain and/or straight-chain of fatty acids. In Haemophilus ducreyi (strain 35000HP / ATCC 700724), this protein is Beta-ketoacyl-[acyl-carrier-protein] synthase III.